Consider the following 28-residue polypeptide: Short cationic peptide-1c (28 aa).

Glutamate 28 carries the glutamic acid 1-amide modification.

In terms of tissue distribution, expressed by the venom gland.

The protein resides in the secreted. The protein is Short cationic peptide-1c of Cupiennius salei (American wandering spider).